The primary structure comprises 310 residues: D-alanyl-D-alanine endopeptidase (310 aa).

Positions 1–23 (MRNRLLSLVTLFLSLSVATAVSA) are cleaved as a signal peptide. The active-site Acyl-ester intermediate is Ser-66. Lys-69 (proton acceptor) is an active-site residue. Residue Ser-123 is part of the active site. Residue Lys-230 coordinates substrate.

The protein belongs to the peptidase S11 family.

The protein resides in the periplasm. Functionally, cell wall formation. In Pseudomonas aeruginosa (strain ATCC 15692 / DSM 22644 / CIP 104116 / JCM 14847 / LMG 12228 / 1C / PRS 101 / PAO1), this protein is D-alanyl-D-alanine endopeptidase (pbpG).